The sequence spans 219 residues: Octanoyltransferase (219 aa).

A BPL/LPL catalytic domain is found at 31–219 (EDLPGFLVFC…KLKRRLLEVL (189 aa)). Residues 69 to 76 (RGGRATYH), 153 to 155 (SVG), and 166 to 168 (GAA) contribute to the substrate site. The Acyl-thioester intermediate role is filled by Cys-184.

It belongs to the LipB family.

The protein resides in the cytoplasm. The catalysed reaction is octanoyl-[ACP] + L-lysyl-[protein] = N(6)-octanoyl-L-lysyl-[protein] + holo-[ACP] + H(+). It participates in protein modification; protein lipoylation via endogenous pathway; protein N(6)-(lipoyl)lysine from octanoyl-[acyl-carrier-protein]: step 1/2. Functionally, catalyzes the transfer of endogenously produced octanoic acid from octanoyl-acyl-carrier-protein onto the lipoyl domains of lipoate-dependent enzymes. Lipoyl-ACP can also act as a substrate although octanoyl-ACP is likely to be the physiological substrate. The chain is Octanoyltransferase from Bdellovibrio bacteriovorus (strain ATCC 15356 / DSM 50701 / NCIMB 9529 / HD100).